Reading from the N-terminus, the 1478-residue chain is Adhesion G protein-coupled receptor L2 (1478 aa).

An N-terminal signal peptide occupies residues Met-1–Gly-25. Residues Phe-26–Thr-855 lie on the Extracellular side of the membrane. Positions Ser-41–Val-130 constitute an SUEL-type lectin domain. Residue Asn-99 is glycosylated (N-linked (GlcNAc...) asparagine). The Olfactomedin-like domain occupies Val-139–Pro-398. Cysteines 140 and 322 form a disulfide. A glycan (N-linked (GlcNAc...) asparagine) is linked at Asn-335. The tract at residues Val-422 to Lys-458 is disordered. The span at Gln-430–Ser-445 shows a compositional bias: polar residues. 7 N-linked (GlcNAc...) asparagine glycosylation sites follow: Asn-524, Asn-633, Asn-735, Asn-748, Asn-791, Asn-796, and Asn-817. Residues Thr-663–Ala-841 enclose the GAIN-B domain. 2 cysteine pairs are disulfide-bonded: Cys-792–Cys-823 and Cys-811–Cys-825. The tract at residues Cys-792–Ala-841 is GPS. Residues Trp-856–Phe-876 traverse the membrane as a helical segment. Residues Arg-877–Asn-884 lie on the Cytoplasmic side of the membrane. Residues Thr-885–Ile-905 traverse the membrane as a helical segment. Topologically, residues Asp-906–Met-911 are extracellular. Residues Ile-912–Met-932 form a helical membrane-spanning segment. Over Cys-933–Lys-955 the chain is Cytoplasmic. The chain crosses the membrane as a helical span at residues Tyr-956–Asp-976. Over Tyr-977–Phe-994 the chain is Extracellular. Residues Ile-995–Ile-1015 form a helical membrane-spanning segment. The Cytoplasmic portion of the chain corresponds to Thr-1016–Val-1056. Residues Leu-1057–Ile-1077 form a helical membrane-spanning segment. Over Asn-1078–Thr-1081 the chain is Extracellular. The chain crosses the membrane as a helical span at residues Ile-1082–Phe-1102. Topologically, residues His-1103–Leu-1478 are cytoplasmic. The segment at Ala-1378 to Ser-1419 is disordered. The span at Gln-1383–Pro-1395 shows a compositional bias: polar residues. 3 positions are modified to phosphoserine: Ser-1393, Ser-1428, and Ser-1449.

This sequence belongs to the G-protein coupled receptor 2 family. Adhesion G-protein coupled receptor (ADGR) subfamily. As to quaternary structure, heterodimer of 2 chains generated by proteolytic processing; the large extracellular N-terminal fragment and the membrane-bound C-terminal fragment predominantly remain associated and non-covalently linked. In terms of processing, autoproteolytically processed at the GPS region of the GAIN-B domain; this cleavage modulates receptor activity. Ubiquitously expressed.

Its subcellular location is the postsynaptic cell membrane. With respect to regulation, forms a heterodimer of 2 chains generated by proteolytic processing that remain associated through non-covalent interactions mediated by the GAIN-B domain. In the inactivated receptor, the Stachel sequence (also named stalk) is embedded in the GAIN-B domain, where it adopts a beta-strand conformation. On activation, the Stachel moves into the 7 transmembrane region and adopts a twisted hook-shaped configuration that forms contacts within the receptor, leading to coupling of a G-alpha protein, which activates signaling. The cleaved GAIN-B and N-terminal domains can then dissociate from the rest of the receptor. Functionally, orphan adhesion G-protein coupled receptor (aGPCR), which mediates synapse specificity. Ligand binding causes a conformation change that triggers signaling via guanine nucleotide-binding proteins (G proteins) and modulates the activity of downstream effectors. Following G-protein coupled receptor activation, associates with cell adhesion molecules that are expressed at the surface of adjacent cells to direct synapse specificity. Specifically mediates the establishment of perforant-path synapses on CA1-region pyramidal neurons in the hippocampus. Localizes to postsynaptic spines in excitatory synapses in the S.lacunosum-moleculare and interacts with presynaptic cell adhesion molecules, such as teneurins, promoting synapse formation. This Bos taurus (Bovine) protein is Adhesion G protein-coupled receptor L2 (ADGRL2).